Here is a 360-residue protein sequence, read N- to C-terminus: Peptide chain release factor 1 (360 aa).

An N5-methylglutamine modification is found at glutamine 235. Residues 284–293 (QRRQQEESST) show a composition bias toward basic and acidic residues. The disordered stretch occupies residues 284–311 (QRRQQEESSTRRNLLGSGDRSDRIRTYN).

It belongs to the prokaryotic/mitochondrial release factor family. Methylated by PrmC. Methylation increases the termination efficiency of RF1.

Its subcellular location is the cytoplasm. Functionally, peptide chain release factor 1 directs the termination of translation in response to the peptide chain termination codons UAG and UAA. The chain is Peptide chain release factor 1 from Sodalis glossinidius (strain morsitans).